We begin with the raw amino-acid sequence, 494 residues long: 4-trimethylaminobutyraldehyde dehydrogenase (494 aa).

S2 bears the N-acetylserine; in 4-trimethylaminobutyraldehyde dehydrogenase, N-terminally processed mark. N6-acetyllysine; alternate is present on K30. K30 bears the N6-succinyllysine; alternate mark. Position 59 is an N6-succinyllysine (K59). Residues K180 and G232 to T236 each bind NAD(+). Catalysis depends on E254, which acts as the Proton acceptor. C288 functions as the Nucleophile in the catalytic mechanism. K298 is modified (N6-acetyllysine). K303 carries the post-translational modification N6-acetyllysine; alternate. N6-succinyllysine; alternate is present on K303. An N6-acetyllysine modification is found at K344. Position 391 (E391) interacts with NAD(+).

The protein belongs to the aldehyde dehydrogenase family. Homotetramer. As to expression, detected in brain (at protein level). High expression in adult liver, skeletal muscle, and kidney. Low levels in heart, pancreas, lung and brain. Expressed in all regions of the brain. Expression levels are variable in the different brain areas, with the highest levels in the spinal cord and the lowest in the occipital pole.

The protein localises to the cytoplasm. Its subcellular location is the cytosol. It carries out the reaction 4-(trimethylamino)butanal + NAD(+) + H2O = 4-(trimethylamino)butanoate + NADH + 2 H(+). It catalyses the reaction an aldehyde + NAD(+) + H2O = a carboxylate + NADH + 2 H(+). The catalysed reaction is 4-aminobutanal + NAD(+) + H2O = 4-aminobutanoate + NADH + 2 H(+). The enzyme catalyses formaldehyde + NAD(+) + H2O = formate + NADH + 2 H(+). It carries out the reaction acetaldehyde + NAD(+) + H2O = acetate + NADH + 2 H(+). It catalyses the reaction imidazole-4-acetaldehyde + NAD(+) + H2O = imidazole-4-acetate + NADH + 2 H(+). The catalysed reaction is acrolein + NAD(+) + H2O = acrylate + NADH + 2 H(+). The enzyme catalyses (5-hydroxyindol-3-yl)acetaldehyde + NAD(+) + H2O = (5-hydroxyindol-3-yl)acetate + NADH + 2 H(+). It carries out the reaction 3,4-dihydroxyphenylacetaldehyde + NAD(+) + H2O = 3,4-dihydroxyphenylacetate + NADH + 2 H(+). It catalyses the reaction spermine monoaldehyde + NAD(+) + H2O = N-(2-carboxyethyl)spermidine + NADH + 2 H(+). The catalysed reaction is propanal + NAD(+) + H2O = propanoate + NADH + 2 H(+). The enzyme catalyses butanal + NAD(+) + H2O = butanoate + NADH + 2 H(+). It carries out the reaction pentanal + NAD(+) + H2O = pentanoate + NADH + 2 H(+). It catalyses the reaction hexanal + NAD(+) + H2O = hexanoate + NADH + 2 H(+). It functions in the pathway amine and polyamine biosynthesis; carnitine biosynthesis. Functionally, converts gamma-trimethylaminobutyraldehyde into gamma-butyrobetaine with high efficiency (in vitro). Can catalyze the irreversible oxidation of a broad range of aldehydes to the corresponding acids in an NAD-dependent reaction, but with low efficiency. Catalyzes the oxidation of aldehydes arising from biogenic amines and polyamines. In Homo sapiens (Human), this protein is 4-trimethylaminobutyraldehyde dehydrogenase (ALDH9A1).